A 527-amino-acid polypeptide reads, in one-letter code: ATP synthase subunit alpha (527 aa).

172 to 179 contributes to the ATP binding site; the sequence is GDRQTGKT.

The protein belongs to the ATPase alpha/beta chains family. F-type ATPases have 2 components, CF(1) - the catalytic core - and CF(0) - the membrane proton channel. CF(1) has five subunits: alpha(3), beta(3), gamma(1), delta(1), epsilon(1). CF(0) has three main subunits: a(1), b(2) and c(9-12). The alpha and beta chains form an alternating ring which encloses part of the gamma chain. CF(1) is attached to CF(0) by a central stalk formed by the gamma and epsilon chains, while a peripheral stalk is formed by the delta and b chains.

Its subcellular location is the cell inner membrane. The catalysed reaction is ATP + H2O + 4 H(+)(in) = ADP + phosphate + 5 H(+)(out). Its function is as follows. Produces ATP from ADP in the presence of a proton gradient across the membrane. The alpha chain is a regulatory subunit. This chain is ATP synthase subunit alpha, found in Bacteroides thetaiotaomicron (strain ATCC 29148 / DSM 2079 / JCM 5827 / CCUG 10774 / NCTC 10582 / VPI-5482 / E50).